Here is a 129-residue protein sequence, read N- to C-terminus: Histone H3-like centromeric protein A (129 aa).

Over residues methionine 1–proline 14 the composition is skewed to basic residues. The interval methionine 1–lysine 30 is disordered. At glycine 2 the chain carries N,N,N-trimethylglycine. Residues serine 16, serine 22, and serine 57 each carry the phosphoserine modification. An H3-like region spans residues lysine 30–glycine 129. A CATD region spans residues cysteine 64–alanine 105.

Belongs to the histone H3 family. In terms of assembly, component of centromeric nucleosomes, where DNA is wrapped around a histone octamer core. The octamer contains two molecules each of H2A, H2B, CENPA and H4 assembled in one CENPA-H4 heterotetramer and two H2A-H2B heterodimers. CENPA modulates the DNA-binding characteristics of nucleosomes so that protruding DNA ends have higher flexibility than in nucleosomes containing conventional histone H3. Inhibits binding of histone H1 to nucleosomes, since histone H1 binds preferentially to rigid DNA linkers that protrude from nucleosomes. Nucleosomes containing CENPA also contain histone H2A variants such as MACROH2A and H2A.Z/H2AZ1. The CENPA-H4 heterotetramer is more compact and structurally more rigid than corresponding H3-H4 heterotetramers. Can assemble into nucleosomes that contain both CENPA and histone H3.3; these nucleosomes interact with a single CENPC chain. Heterotrimer composed of HJURP, CENPA and histone H4, where HJURP interacts with the dimer formed by CENPA and histone H4 and prevents tetramerization of CENPA and H4. Component of the CENPA-NAC complex, at least composed of CENPA, CENPC, CENPH, CENPM, CENPN, CENPT and CENPU. Interacts (via CATD domain) with HJURP; the interaction is direct and is required for its localization to centromeres. Interacts with CENPC, CENPN and CENPT; interaction is direct. Part of a centromere complex consisting of CENPA, CENPT and CENPW. Identified in centromere complexes containing histones H2A, H2B and H4, and at least CENPA, CENPB, CENPC, CENPT, CENPN, HJURP, SUPT16H, SSRP1 and RSF1. Can self-associate. The CENPA-H4 heterotetramer can bind DNA by itself (in vitro). Interacts with CDK1, PPP1CA and RBBP7. Trimethylated by NTMT1 at the N-terminal glycine after cleavage of Met-1. Methylation is low before incorporation into nucleosomes and increases with cell cycle progression, with the highest levels in mitotic nucleosomes. Post-translationally, phosphorylated by CDK1 at Ser-57 during early mitosis; this abolishes association with chromatin and centromeres, prevents interaction with HJURP and thereby prevents premature assembly of CENPA into centromeres. Dephosphorylated at Ser-57 by PPP1CA during late mitosis. In terms of processing, poly-ADP-ribosylated by PARP1.

The protein resides in the nucleus. The protein localises to the chromosome. Its subcellular location is the centromere. Functionally, histone H3-like nucleosomal protein that is specifically found in centromeric nucleosomes. Replaces conventional H3 in the nucleosome core of centromeric chromatin that serves as an assembly site for the inner kinetochore. The presence of CENPA subtly modifies the nucleosome structure and the way DNA is wrapped around the nucleosome and gives rise to protruding DNA ends that are less well-ordered and rigid compared to nucleosomes containing histone H3. May serve as an epigenetic mark that propagates centromere identity through replication and cell division. Required for recruitment and assembly of kinetochore proteins, and as a consequence required for progress through mitosis, chromosome segregation and cytokinesis. In Cricetulus griseus (Chinese hamster), this protein is Histone H3-like centromeric protein A (CENPA).